The chain runs to 1803 residues: MATPVRGETRNVIDDNISARIQSKVKTNDTVRQTPSSLRKVSIKDEQVRQYQRNLNRFKTILNGLKAEEEKLSEADDIQMLAEKLLKLGETIDKVENRIVDLVEKIQLLETNENNNILHEHIDATGTYYLFDTLTSTNKRFYPKDCVFDYRTNNVENIPILLNNFKKFIKKYQFDDVFENDIIEIDPRENEILCKIIKEGLGESLDIMNTNTTDIFRIIDGLKKQNIEVCMVEMSELEPGEKVLVDTTCRNSALLMNKLQKLVLMEKWIFSKCCQDCPNLKDYLQEAIMGTLHESLRNSVKQRLYNIPHDVGIDHEEFLINTVIETVIDLSPIADDQIENSCMYCKSVFHCSINCKKKPNRELGLTRPISQKPIIYKVHRDNNHLSPVQNEQKSWNKTQKRSNKVYNSKKLVIIDTGSGVNITNDKTLLHNYEDSNRSTRFFGIGKNSSVSVKGYGYIKIKNGHNNTDNKCLLTYYVPEEESTIISCYDLAKKTKMVLSRKYTRLGNKIIKIKTKIVNGVIHVKMNELIERPSDDSKINAIKPTSSPGFKLNKRSITLEDAHKRMGHTGIQQIENSIKHNHYEESLDLIKEPNEFWCQTCKISKATKRNHYTGSMNNHSTDHEPGSSWCMDIFGPVSSSNADTKRYMLIMVDNNTRYCMTSTHFNKNAETILAQVRKNIQYVETQFDRKVREINSDRGTEFTNDQIEEYFISKGIHHILTSTQDHAANGRAERYIRTIITDATTLLRQSNLRVKFWEYAVTSATNIRNYLEHKSTGKLPLKAISRQPVTVRLMSFLPFGEKGIIWNHNHKKLKPSGLPSIILCKDPNSYGYKFFIPSKNKIVTSDNYTIPNYTMDGRVRNTQNINKSHQFSSDNDDEEDQIETVTNLCEALENYEDDNKPITRLEDLFTEEELSQIDSNAKYPSPSNNLEGDLDYVFSDVEESGDYDVESELSTTNNSISTDKNKILSNKDFNSELASTEISISGIDKKGLINTSHIDEDKYDEKVHRIPSIIQEKLVGSKNTIKINDENKISDRIRSKNIGSILNTGLSRCVDITDESITNKDESMHNAKPELIQEQLKKTNHETSFPKEGSIGTNVKFRNTNNEISLKTGDTSLPIKTLESINNHHSNDYSTNKVEKFEKENHHPPPIEDIVDMSDQTDMESNCQDGNNLKELKVTDKNVPTDNGTNVSPRLEQNIEASGSPVQTVNKSAFLNKEFSSLNMKRKRKRHDKNNSLTSYELERDKKRSKKNRVKLIPDNMETVSAPKIRAIYYNEAISKNPDLKEKHEYKQAYHKELQNLKDMKVFDVDVKYSRSEIPDNLIVPTNTIFTKKRNGIYKARIVCRGDTQSPDTYSVITTESLNHNHIKIFLMIANNRNMFMKTLDINHAFLYAKLEEEIYIPHPHDRRCVVKLNKALYGLKQSPKEWNDHLRQYLNGIGLKDNSYTPGLYQTEDKNLMIAVYVDDCVIAASNEQRLDEFINKLKSNFELKITGTLIDDVLDTDILGMDLVYNKRLGTIDLTLKSFINRMDKKYNEELKKIRKSSIPHMSTYKIDPKKDVLQMSEEEFRQGVLKLQQLLGELNYVRHKCRYDIEFAVKKVARLVNYPHERVFYMIYKIIQYLVRYKDIGIHYDRDCNKDKKVIAITDASVGSEYDAQSRIGVILWYGMNIFNVYSNKSTNRCVSSTEAELHAIYEGYADSETLKVTLKELGEGDNNDIVMITDSKPAIQGLNRSYQQPKEKFTWIKTEIIKEKIKEKSIKLLKITGKGNIADLLTKPVSASDFKRFIQVLKNKITSQDILASTDY.

Residues R39–N115 adopt a coiled-coil conformation. The tract at residues N382–Y502 is ty4 protease. The active-site For protease activity; shared with dimeric partner is D415. Positions A540–C600 are integrase-type zinc finger-like. The Integrase catalytic domain occupies T620–P787. The Mg(2+) site is built by D631 and D696. A disordered region spans residues K1224–K1250. One can recognise a Reverse transcriptase Ty1/copia-type domain in the interval R1376–N1511. Mg(2+) contacts are provided by D1384, D1463, D1464, D1645, E1687, and D1721. Residues D1645–K1791 enclose the RNase H Ty1/copia-type domain.

As to quaternary structure, the protease is a homodimer, whose active site consists of two apposed aspartic acid residues. Proteolytically processed into capsid protein (CA), Ty4 protease (PR), integrase (IN) and reverse transcriptase/ribonuclease H (RT) proteins. Initially, virus-like particles (VLPs) are composed of the structural unprocessed proteins Gag and Gag-Pol, and also contain the host initiator methionine tRNA (tRNA(i)-Met) which serves as a primer for minus-strand DNA synthesis, and a dimer of genomic Ty RNA. Processing of the polyproteins occurs within the particle and proceeds by an ordered pathway, called maturation. First, the protease (PR) is released by autocatalytic cleavage of the Gag-Pol polyprotein, and this cleavage is a prerequisite for subsequent processing at the remaining sites to release the mature structural and catalytic proteins. Maturation takes place prior to the RT reaction and is required to produce transposition-competent VLPs.

Its subcellular location is the cytoplasm. It is found in the nucleus. It catalyses the reaction DNA(n) + a 2'-deoxyribonucleoside 5'-triphosphate = DNA(n+1) + diphosphate. The enzyme catalyses Endonucleolytic cleavage to 5'-phosphomonoester.. Its function is as follows. Capsid protein (CA) is the structural component of the virus-like particle (VLP), forming the shell that encapsulates the retrotransposons dimeric RNA genome. In terms of biological role, the aspartyl protease (PR) mediates the proteolytic cleavages of the Gag and Gag-Pol polyproteins after assembly of the VLP. Functionally, reverse transcriptase/ribonuclease H (RT) is a multifunctional enzyme that catalyzes the conversion of the retro-elements RNA genome into dsDNA within the VLP. The enzyme displays a DNA polymerase activity that can copy either DNA or RNA templates, and a ribonuclease H (RNase H) activity that cleaves the RNA strand of RNA-DNA heteroduplexes during plus-strand synthesis and hydrolyzes RNA primers. The conversion leads to a linear dsDNA copy of the retrotransposon that includes long terminal repeats (LTRs) at both ends. Integrase (IN) targets the VLP to the nucleus, where a subparticle preintegration complex (PIC) containing at least integrase and the newly synthesized dsDNA copy of the retrotransposon must transit the nuclear membrane. Once in the nucleus, integrase performs the integration of the dsDNA into the host genome. This is Transposon Ty4-J Gag-Pol polyprotein (TY4B-J) from Saccharomyces cerevisiae (strain ATCC 204508 / S288c) (Baker's yeast).